The chain runs to 134 residues: MKSVITISASLAISLMLCCTAQANDHKILGVIAMPRNETNDLALKLPVCRIVKRIQLSADHGDLQLSGASIYFKATRSASQTLNIPSEIKEEQTTDWININSDNDNKRCVSKITFSGHTVNSSDMATLKIIGDD.

A signal peptide spans 1–23 (MKSVITISASLAISLMLCCTAQA).

It belongs to the UPF0412 family.

This is UPF0412 protein YaaI from Escherichia coli (strain UTI89 / UPEC).